Consider the following 208-residue polypeptide: Urease accessory protein UreG (208 aa).

A GTP-binding site is contributed by 12–19 (GPVGAGKT).

The protein belongs to the SIMIBI class G3E GTPase family. UreG subfamily. As to quaternary structure, homodimer. UreD, UreF and UreG form a complex that acts as a GTP-hydrolysis-dependent molecular chaperone, activating the urease apoprotein by helping to assemble the nickel containing metallocenter of UreC. The UreE protein probably delivers the nickel.

It is found in the cytoplasm. Functionally, facilitates the functional incorporation of the urease nickel metallocenter. This process requires GTP hydrolysis, probably effectuated by UreG. The chain is Urease accessory protein UreG from Rhodobacter capsulatus (Rhodopseudomonas capsulata).